The chain runs to 219 residues: 7-carboxy-7-deazaguanine synthase (219 aa).

Substrate-binding positions include 22–24 (IQG) and arginine 37. The Radical SAM core domain occupies 28–219 (LVGLPSVFIR…PQVHKCFDLK (192 aa)). The [4Fe-4S] cluster site is built by cysteine 41, cysteine 45, and cysteine 48. Threonine 81 is a binding site for substrate. Residues glycine 83 and 130–132 (SPK) each bind S-adenosyl-L-methionine.

It belongs to the radical SAM superfamily. 7-carboxy-7-deazaguanine synthase family. In terms of assembly, homodimer. [4Fe-4S] cluster is required as a cofactor. It depends on S-adenosyl-L-methionine as a cofactor. The cofactor is Mg(2+).

The catalysed reaction is 6-carboxy-5,6,7,8-tetrahydropterin + H(+) = 7-carboxy-7-deazaguanine + NH4(+). The protein operates within purine metabolism; 7-cyano-7-deazaguanine biosynthesis. Catalyzes the complex heterocyclic radical-mediated conversion of 6-carboxy-5,6,7,8-tetrahydropterin (CPH4) to 7-carboxy-7-deazaguanine (CDG), a step common to the biosynthetic pathways of all 7-deazapurine-containing compounds. In Aquifex aeolicus (strain VF5), this protein is 7-carboxy-7-deazaguanine synthase.